Reading from the N-terminus, the 662-residue chain is Translation factor GUF1, mitochondrial (662 aa).

The transit peptide at 1-28 (MYIHSSRTVLARYGSRTPLLRPSVLGRY) directs the protein to the mitochondrion. Residues 62-244 (ENYRNFSIVA…AIVDHIPAPD (183 aa)) enclose the tr-type G domain. GTP contacts are provided by residues 71–78 (AHVDHGKS), 137–141 (DTPGH), and 191–194 (NKID).

It belongs to the TRAFAC class translation factor GTPase superfamily. Classic translation factor GTPase family. LepA subfamily.

The protein resides in the mitochondrion inner membrane. It carries out the reaction GTP + H2O = GDP + phosphate + H(+). In terms of biological role, promotes mitochondrial protein synthesis. May act as a fidelity factor of the translation reaction, by catalyzing a one-codon backward translocation of tRNAs on improperly translocated ribosomes. Binds to mitochondrial ribosomes in a GTP-dependent manner. This is Translation factor GUF1, mitochondrial from Meyerozyma guilliermondii (strain ATCC 6260 / CBS 566 / DSM 6381 / JCM 1539 / NBRC 10279 / NRRL Y-324) (Yeast).